The primary structure comprises 403 residues: Histidine--tRNA ligase (403 aa).

The protein belongs to the class-II aminoacyl-tRNA synthetase family. In terms of assembly, homodimer.

It is found in the cytoplasm. It carries out the reaction tRNA(His) + L-histidine + ATP = L-histidyl-tRNA(His) + AMP + diphosphate + H(+). This Aquifex aeolicus (strain VF5) protein is Histidine--tRNA ligase (hisS).